Here is a 189-residue protein sequence, read N- to C-terminus: Early E3 20.5 kDa glycoprotein (189 aa).

N-linked (GlcNAc...) asparagine; by host glycans are attached at residues asparagine 73 and asparagine 137.

The protein belongs to the adenoviridae E3_20 family.

E3 proteins seem to be dispensable for virus growth in tissue culture cells. They are potentially important for virus growth under special conditions; E3 region may help adenoviruses to evade the immune surveillance of the host. The sequence is that of Early E3 20.5 kDa glycoprotein from Homo sapiens (Human).